The chain runs to 433 residues: Divergent protein kinase domain 2B (433 aa).

The first 29 residues, 1–29 (MEPRLGPKAAALHLGWPFLLLWVSGLSYS), serve as a signal peptide directing secretion. Residue asparagine 100 is glycosylated (N-linked (GlcNAc...) asparagine).

It belongs to the DIPK family.

The protein resides in the secreted. The chain is Divergent protein kinase domain 2B (DIPK2B) from Bos taurus (Bovine).